The primary structure comprises 85 residues: UPF0386 protein RHE_CH01859 (85 aa).

This sequence belongs to the UPF0386 family.

The chain is UPF0386 protein RHE_CH01859 from Rhizobium etli (strain ATCC 51251 / DSM 11541 / JCM 21823 / NBRC 15573 / CFN 42).